The primary structure comprises 67 residues: DNA-directed RNA polymerase subunit omega (67 aa).

This sequence belongs to the RNA polymerase subunit omega family. The RNAP catalytic core consists of 2 alpha, 1 beta, 1 beta' and 1 omega subunit. When a sigma factor is associated with the core the holoenzyme is formed, which can initiate transcription.

It catalyses the reaction RNA(n) + a ribonucleoside 5'-triphosphate = RNA(n+1) + diphosphate. Its function is as follows. Promotes RNA polymerase assembly. Latches the N- and C-terminal regions of the beta' subunit thereby facilitating its interaction with the beta and alpha subunits. This Polaromonas sp. (strain JS666 / ATCC BAA-500) protein is DNA-directed RNA polymerase subunit omega.